The chain runs to 349 residues: Small ribosomal subunit protein eS6 (349 aa).

The disordered stretch occupies residues 224-349; the sequence is RRRSRLSSMR…AKKEKKQKKK (126 aa). 2 stretches are compositionally biased toward basic and acidic residues: residues 231 to 251 and 260 to 334; these read SMRD…EKAA and KKEA…EAAK.

Belongs to the eukaryotic ribosomal protein eS6 family. In terms of assembly, component of the small ribosomal subunit. Part of the small subunit (SSU) processome, composed of more than 70 proteins and the RNA chaperone small nucleolar RNA (snoRNA) U3. Ribosomal protein S6 is the major substrate of protein kinases in eukaryote ribosomes.

The protein resides in the cytoplasm. The protein localises to the nucleus. It localises to the nucleolus. In terms of biological role, component of the 40S small ribosomal subunit. Plays an important role in controlling cell growth and proliferation through the selective translation of particular classes of mRNA. Part of the small subunit (SSU) processome, first precursor of the small eukaryotic ribosomal subunit. During the assembly of the SSU processome in the nucleolus, many ribosome biogenesis factors, an RNA chaperone and ribosomal proteins associate with the nascent pre-rRNA and work in concert to generate RNA folding, modifications, rearrangements and cleavage as well as targeted degradation of pre-ribosomal RNA by the RNA exosome. The polypeptide is Small ribosomal subunit protein eS6 (RpS6) (Aedes albopictus (Asian tiger mosquito)).